Reading from the N-terminus, the 251-residue chain is Haloacid dehalogenase-like hydrolase domain-containing protein 3 (251 aa).

N6-acetyllysine; alternate is present on Lys-15. Lys-15 is subject to N6-succinyllysine; alternate. The residue at position 130 (Lys-130) is an N6-acetyllysine.

Belongs to the HAD-like hydrolase superfamily.

This chain is Haloacid dehalogenase-like hydrolase domain-containing protein 3 (HDHD3), found in Bos taurus (Bovine).